We begin with the raw amino-acid sequence, 158 residues long: Arginine repressor (158 aa).

Belongs to the ArgR family.

The protein resides in the cytoplasm. Its pathway is amino-acid biosynthesis; L-arginine biosynthesis [regulation]. Its function is as follows. Regulates arginine biosynthesis genes. In Phocaeicola vulgatus (strain ATCC 8482 / DSM 1447 / JCM 5826 / CCUG 4940 / NBRC 14291 / NCTC 11154) (Bacteroides vulgatus), this protein is Arginine repressor.